The sequence spans 172 residues: Protein nemuri (172 aa).

The first 25 residues, 1–25 (MSAKYTLIFALAALCCLVFSTEAAA), serve as a signal peptide directing secretion. The segment at 27–172 (RSRVLSSRRG…KRRSGKGNKA (146 aa)) is disordered. Basic and acidic residues-rich tracts occupy residues 35 to 50 (RGSELVEKTSDNKEDS), 58 to 90 (DLERQEQEEQNDRLEGRSDDVAEGSDNKEDKET), and 97 to 108 (TIVKPNKDDARA). A coiled-coil region spans residues 45-74 (DNKEDSELAAQEQDLERQEQEEQNDRLEGR). The segment covering 109 to 172 (RRIVRAGRRR…KRRSGKGNKA (64 aa)) has biased composition (basic residues).

Detected in the brain where it accumulates in the dorsal fan-shaped body following sleep deprivation (at protein level). Expressed in the adult body.

The protein localises to the secreted. Antimicrobial protein which is essential for the homeostatic regulation of sleep. Promotes sleep following sleep deprivation or bacterial infection and increases survival following bacterial infection. Likely to promote survival to bacterial infection in two ways; by contributing to the innate immune response and by promoting sleep during sickness to aid recovery. In Drosophila melanogaster (Fruit fly), this protein is Protein nemuri.